Reading from the N-terminus, the 687-residue chain is DNA ligase (687 aa).

NAD(+)-binding positions include 33–37 (DAEFD), 83–84 (SL), and Glu113. Residue Lys115 is the N6-AMP-lysine intermediate of the active site. The NAD(+) site is built by Arg136, Glu176, Lys292, and Lys316. Zn(2+)-binding residues include Cys410, Cys413, Cys429, and Cys435. Positions 599 to 687 (SVPRTLAGVT…GPPAEVGEPT (89 aa)) constitute a BRCT domain.

This sequence belongs to the NAD-dependent DNA ligase family. LigA subfamily. The cofactor is Mg(2+). Mn(2+) is required as a cofactor.

It catalyses the reaction NAD(+) + (deoxyribonucleotide)n-3'-hydroxyl + 5'-phospho-(deoxyribonucleotide)m = (deoxyribonucleotide)n+m + AMP + beta-nicotinamide D-nucleotide.. DNA ligase that catalyzes the formation of phosphodiester linkages between 5'-phosphoryl and 3'-hydroxyl groups in double-stranded DNA using NAD as a coenzyme and as the energy source for the reaction. It is essential for DNA replication and repair of damaged DNA. The polypeptide is DNA ligase (Mycobacterium marinum (strain ATCC BAA-535 / M)).